The primary structure comprises 108 residues: UPF0060 membrane protein SAB2216c (108 aa).

4 helical membrane passes run 5–25 (IFIF…IWLW), 31–51 (CSLV…IATF), 60–80 (VYAA…MVVD), and 86–106 (KYDV…LLPS).

It belongs to the UPF0060 family.

It is found in the cell membrane. This is UPF0060 membrane protein SAB2216c from Staphylococcus aureus (strain bovine RF122 / ET3-1).